The chain runs to 142 residues: Large ribosomal subunit protein uL11 (142 aa).

This sequence belongs to the universal ribosomal protein uL11 family. In terms of assembly, part of the ribosomal stalk of the 50S ribosomal subunit. Interacts with L10 and the large rRNA to form the base of the stalk. L10 forms an elongated spine to which L12 dimers bind in a sequential fashion forming a multimeric L10(L12)X complex. Post-translationally, one or more lysine residues are methylated.

Functionally, forms part of the ribosomal stalk which helps the ribosome interact with GTP-bound translation factors. The chain is Large ribosomal subunit protein uL11 from Bartonella quintana (strain Toulouse) (Rochalimaea quintana).